The chain runs to 23 residues: Septenin 2b (23 aa).

In terms of tissue distribution, expressed in skin glands.

The protein resides in the secreted. Functionally, may act as an antimicrobial peptide. This chain is Septenin 2b, found in Osteopilus septentrionalis (Cuban treefrog).